Consider the following 297-residue polypeptide: Thiosulfate sulfurtransferase (297 aa).

Residue Lys-14 is modified to N6-acetyllysine; alternate. An N6-succinyllysine; alternate modification is found at Lys-14. The Rhodanese 1 domain occupies 25–143 (LGPGLRVLDA…WLKEGHPVTS (119 aa)). The O-linked (GlcNAc) serine glycan is linked to Ser-35. A Phosphoserine modification is found at Ser-38. Lys-136 is subject to N6-acetyllysine; alternate. An N6-succinyllysine; alternate modification is found at Lys-136. The hinge stretch occupies residues 144-159 (EPSRPEPAVFKATLDR). An N6-acetyllysine modification is found at Lys-163. Residues 173–288 (QSKRFQLVDS…WFHQAPPETR (116 aa)) enclose the Rhodanese 2 domain. Lys-175 bears the N6-acetyllysine; alternate mark. Lys-175 is subject to N6-succinyllysine; alternate. Arg-187 contributes to the substrate binding site. Lys-224 is subject to N6-acetyllysine; alternate. Lys-224 bears the N6-succinyllysine; alternate mark. Residue Lys-236 is modified to N6-acetyllysine. Position 237 is an N6-acetyllysine; alternate (Lys-237). At Lys-237 the chain carries N6-succinyllysine; alternate. Cys-248 (cysteine persulfide intermediate) is an active-site residue. Residue Lys-250 participates in substrate binding.

As to quaternary structure, monomer.

It localises to the mitochondrion matrix. The enzyme catalyses thiosulfate + hydrogen cyanide = thiocyanate + sulfite + 2 H(+). Its function is as follows. Together with MRPL18, acts as a mitochondrial import factor for the cytosolic 5S rRNA. Only the nascent unfolded cytoplasmic form is able to bind to the 5S rRNA. Formation of iron-sulfur complexes and cyanide detoxification. Binds molecular oxygen and sulfur. The polypeptide is Thiosulfate sulfurtransferase (TST) (Cricetulus griseus (Chinese hamster)).